A 353-amino-acid polypeptide reads, in one-letter code: E3 ubiquitin-protein ligase TRIM63 (353 aa).

The RING-type zinc finger occupies 23-79 (CPICLEMFTKPVVILPCQHNLCRKCANDIFQAANPYWTSRGSSVSMSGGRFRCPTCR). The segment at 74 to 218 (RCPTCRHEVI…LSQKFDTLYA (145 aa)) is interaction with TTN. A B box-type zinc finger spans residues 117 to 159 (GSHPMCKEHEDEKINIYCLTCEVPTCSMCKVFGIHKACEVAPL). Positions 122, 125, 145, and 151 each coordinate Zn(2+). A coiled-coil region spans residues 207–269 (EELSQKFDTL…VETAIQSLDE (63 aa)). In terms of domain architecture, COS spans 267–325 (LDEPGGATFLLTAKQLIKSIVEASKGCQLGKTEQGFENMDFFTLDLEHIADALRAIDFG). Positions 326–344 (TDEEEEEFIEEEDQEEEES) are enriched in acidic residues. The tract at residues 326-353 (TDEEEEEFIEEEDQEEEESTEGKEEGHQ) is disordered.

In terms of assembly, homodimer. Homooligomer and heterooligomer. Interacts with SUMO2, titin/TTN and GMEB1. Interacts with TRIM54 and probably with TRIM55 and TNNI3. Forms a ternary complex with RACK1 and PRKCE. Interacts with CKM. As to expression, muscle specific. Selectively expressed in heart and skeletal muscle. Also expressed in the iris.

The protein localises to the cytoplasm. Its subcellular location is the nucleus. It localises to the myofibril. The protein resides in the sarcomere. It is found in the m line. The protein localises to the z line. The enzyme catalyses S-ubiquitinyl-[E2 ubiquitin-conjugating enzyme]-L-cysteine + [acceptor protein]-L-lysine = [E2 ubiquitin-conjugating enzyme]-L-cysteine + N(6)-ubiquitinyl-[acceptor protein]-L-lysine.. It functions in the pathway protein modification; protein ubiquitination. Functionally, E3 ubiquitin ligase. Mediates the ubiquitination and subsequent proteasomal degradation of CKM, GMEB1 and HIBADH. Regulates the proteasomal degradation of muscle proteins under amino acid starvation, where muscle protein is catabolized to provide other organs with amino acids. Inhibits de novo skeletal muscle protein synthesis under amino acid starvation. Regulates proteasomal degradation of cardiac troponin I/TNNI3 and probably of other sarcomeric-associated proteins. May play a role in striated muscle atrophy and hypertrophy by regulating an anti-hypertrophic PKC-mediated signaling pathway. May regulate the organization of myofibrils through TTN in muscle cells. The polypeptide is E3 ubiquitin-protein ligase TRIM63 (TRIM63) (Homo sapiens (Human)).